Here is a 396-residue protein sequence, read N- to C-terminus: S-adenosylmethionine synthase (396 aa).

His-16 provides a ligand contact to ATP. Asp-18 serves as a coordination point for Mg(2+). Glu-44 is a binding site for K(+). L-methionine contacts are provided by Glu-57 and Gln-100. The flexible loop stretch occupies residues 100–110; it reads QSKDIALGVDK. Residues 176-178, 243-244, Asp-252, 258-259, Ala-275, and Lys-279 each bind ATP; these read DGK, RF, and RK. Asp-252 provides a ligand contact to L-methionine. Lys-283 serves as a coordination point for L-methionine.

Belongs to the AdoMet synthase family. As to quaternary structure, homotetramer; dimer of dimers. Mg(2+) serves as cofactor. K(+) is required as a cofactor.

The protein resides in the cytoplasm. It catalyses the reaction L-methionine + ATP + H2O = S-adenosyl-L-methionine + phosphate + diphosphate. The protein operates within amino-acid biosynthesis; S-adenosyl-L-methionine biosynthesis; S-adenosyl-L-methionine from L-methionine: step 1/1. Its function is as follows. Catalyzes the formation of S-adenosylmethionine (AdoMet) from methionine and ATP. The overall synthetic reaction is composed of two sequential steps, AdoMet formation and the subsequent tripolyphosphate hydrolysis which occurs prior to release of AdoMet from the enzyme. The protein is S-adenosylmethionine synthase of Lachnoclostridium phytofermentans (strain ATCC 700394 / DSM 18823 / ISDg) (Clostridium phytofermentans).